Reading from the N-terminus, the 738-residue chain is Integrin beta-2-like protein (738 aa).

Positions 1 to 22 (MLGQCTLLPVLAGLLSLESALS) are cleaved as a signal peptide. Residues 23–671 (QLCTKDNVST…LVCAEISNTT (649 aa)) are Extracellular-facing. The PSI domain maps to 24-74 (LCTKDNVSTCQDCIRSGPSCAWCQKLNFTGRGEPDSVRCDTPEQLLLKGCT). Disulfide bonds link Cys25–Cys419, Cys33–Cys43, Cys36–Cys73, Cys46–Cys62, Cys218–Cys258, Cys358–Cys372, Cys421–Cys439, Cys431–Cys442, Cys444–Cys453, Cys455–Cys486, Cys469–Cys484, Cys478–Cys489, Cys491–Cys506, Cys508–Cys531, Cys513–Cys529, Cys521–Cys534, Cys536–Cys545, Cys547–Cys570, Cys554–Cys568, Cys562–Cys573, Cys575–Cys584, Cys594–Cys603, and Cys600–Cys664. Asn29 carries N-linked (GlcNAc...) asparagine glycosylation. N-linked (GlcNAc...) asparagine glycosylation is found at Asn50, Asn102, Asn173, Asn226, Asn252, Asn342, Asn360, and Asn386. Positions 126–329 (SVDLYFLMGL…DSSNVAQLIR (204 aa)) constitute a VWFA domain. I-EGF domains are found at residues 421–454 (CQEQSQHHSLCGGKGAMECGICRCNSGYAGKNCE), 455–507 (CQTQ…QYCE), 508–546 (CNNVNCERYDGQVCGGPERGHCSCGRCFCRYGFVGSACQ), and 547–585 (CRMSTSGCLNNRMVECSGHGRCYCNRCLCDPGYQPPLCE). Asn473 is a glycosylation site (N-linked (GlcNAc...) asparagine). Asn627 and Asn669 each carry an N-linked (GlcNAc...) asparagine glycan. The helical transmembrane segment at 672-692 (ILLGVIVGVLLAVIFLLVYCM) threads the bilayer. The Cytoplasmic segment spans residues 693–738 (VYLKGTQKAAKLPRKGGAQSTLAQQPHFQEPHHVEPVWNQERQGTQ). The tract at residues 709-738 (GAQSTLAQQPHFQEPHHVEPVWNQERQGTQ) is disordered. Polar residues predominate over residues 710 to 719 (AQSTLAQQPH).

The protein belongs to the integrin beta chain family. As to quaternary structure, monomer and homodimer. Unlike integrin beta chains, no alpha chain partner has yet been found. In terms of processing, N-glycosylated. As to expression, expressed predominantly in maturing and mature neutrophils.

Its subcellular location is the cell membrane. During inflammatory stimulation, plays a role in retaining Cxcl13-expressing cells at the site of the inflammatory response. The polypeptide is Integrin beta-2-like protein (Mus musculus (Mouse)).